A 397-amino-acid polypeptide reads, in one-letter code: Acetate kinase (397 aa).

N7 lines the Mg(2+) pocket. K14 contributes to the ATP binding site. R88 is a binding site for substrate. The active-site Proton donor/acceptor is the D145. ATP is bound by residues 205–209 (HLGNG), 279–281 (DMR), and 326–330 (GIGEN). E380 provides a ligand contact to Mg(2+).

The protein belongs to the acetokinase family. As to quaternary structure, homodimer. Requires Mg(2+) as cofactor. Mn(2+) serves as cofactor.

It localises to the cytoplasm. The enzyme catalyses acetate + ATP = acetyl phosphate + ADP. Its pathway is metabolic intermediate biosynthesis; acetyl-CoA biosynthesis; acetyl-CoA from acetate: step 1/2. In terms of biological role, catalyzes the formation of acetyl phosphate from acetate and ATP. Can also catalyze the reverse reaction. The sequence is that of Acetate kinase from Campylobacter concisus (strain 13826).